The following is a 598-amino-acid chain: MAQRLEAEGNKNFKGKSKWDDGSDKDDIGKISVRCEDGGITYIRFDYIKSGQPQYNTFPGNPGRGILQTFDINHKNDEHLESVEGYYDPKSDAIKGLQFKTNMRISELIGYANDGATKFSLAVEGKKIIGFHGAYNTYLNSLGAYVTWIVPTKLKAKGGKGGKEWNDGADHEGITKIYVRGGYEGLQYVKFDYIKDGQQIYGSPHGVRGRGFTELFEINHLDKEYLISVEGYYDEGESGVIQGIQFKTNIRTSELMGDNRGRKFSLAANGKKIIGFHGYAEKNLNSLGAYFTTSPFTKLEVGTTSADLWDDGTFDGIRNVYIHYDGDAVCCVEVDYDNKGKVEKREHGIMIAPFIERGEFVVDYPNEFITSVEVTISKQNDSPVPSLTSETVASLTFKTSKGRTSSTFGSPATKKFVLQSKGCGVVGFLGRSSYYTYALGAHFCPLPPLPDGEKVEAKGGDGGASWDDGRFDCIRKIYIGHSEMGIAFVKFLYDKDNKVVVGDDHGSKTLLGVDEFELEHPDEYLISVEGSYDVVDGSESEVIRMLRFKTNMRTSQLFGHETTSNFTLQKECHKIVGFHGKIGEMLHQIGVHVLPITD.

A disordered region spans residues 1-23 (MAQRLEAEGNKNFKGKSKWDDGS). 4 Jacalin-type lectin domains span residues 2-148 (AQRL…YVTW), 151-293 (PTKL…YFTT), 295-445 (PFTK…HFCP), and 452-595 (GEKV…HVLP).

It belongs to the jacalin lectin family.

The polypeptide is Jacalin-related lectin 17 (JAL17) (Arabidopsis thaliana (Mouse-ear cress)).